Reading from the N-terminus, the 436-residue chain is GTPase Der (436 aa).

EngA-type G domains are found at residues 4-165 and 172-347; these read NVIA…NFDS and FKLS…ENLE. GTP contacts are provided by residues 10 to 17, 57 to 61, 119 to 122, 178 to 185, 225 to 229, and 290 to 293; these read GKPNVGKS, DTGGI, NKLD, GQPNSGKS, DTAGI, and NKWD. Residues 348 to 432 form the KH-like domain; sequence REIKPSVLTN…PINIIFKNKS (85 aa).

Belongs to the TRAFAC class TrmE-Era-EngA-EngB-Septin-like GTPase superfamily. EngA (Der) GTPase family. Associates with the 50S ribosomal subunit.

GTPase that plays an essential role in the late steps of ribosome biogenesis. In Mycoplasmopsis agalactiae (strain NCTC 10123 / CIP 59.7 / PG2) (Mycoplasma agalactiae), this protein is GTPase Der.